The chain runs to 92 residues: Acylphosphatase (92 aa).

In terms of domain architecture, Acylphosphatase-like spans 5–92; it reads GVTIYVYGRV…EDIADFIVRH (88 aa). Active-site residues include Arg-20 and Asn-38.

Belongs to the acylphosphatase family.

It catalyses the reaction an acyl phosphate + H2O = a carboxylate + phosphate + H(+). This Photorhabdus laumondii subsp. laumondii (strain DSM 15139 / CIP 105565 / TT01) (Photorhabdus luminescens subsp. laumondii) protein is Acylphosphatase (acyP).